Consider the following 482-residue polypeptide: Rhamnulokinase (482 aa).

Position 13–17 (13–17 (ASSGR)) interacts with ATP. Residues Gly83 and 232–234 (HDT) contribute to the substrate site. The active-site Proton acceptor is Asp233. Thr255 contacts ATP. Residue Asn292 coordinates substrate. Residue Asn300 participates in ATP binding. The cysteines at positions 349 and 366 are disulfide-linked. Residue Gly398 coordinates ATP. Cys409 and Cys413 are joined by a disulfide.

It belongs to the rhamnulokinase family. The cofactor is Mg(2+).

The enzyme catalyses L-rhamnulose + ATP = L-rhamnulose 1-phosphate + ADP + H(+). Its pathway is carbohydrate degradation; L-rhamnose degradation; glycerone phosphate from L-rhamnose: step 2/3. In terms of biological role, involved in the catabolism of L-rhamnose (6-deoxy-L-mannose). Catalyzes the transfer of the gamma-phosphate group from ATP to the 1-hydroxyl group of L-rhamnulose to yield L-rhamnulose 1-phosphate. The sequence is that of Rhamnulokinase from Mannheimia succiniciproducens (strain KCTC 0769BP / MBEL55E).